A 570-amino-acid polypeptide reads, in one-letter code: Glycine--tRNA ligase (570 aa).

Substrate-binding residues include Arg-99 and Glu-165. Residues 197-199, 207-212, 324-325, and 443-446 each bind ATP; these read RNE, LRLREF, EC, and GIDR. 212–216 contacts substrate; it reads FTQAE. 439 to 443 contacts substrate; the sequence is EPSFG.

Belongs to the class-II aminoacyl-tRNA synthetase family.

The protein resides in the cytoplasm. The catalysed reaction is tRNA(Gly) + glycine + ATP = glycyl-tRNA(Gly) + AMP + diphosphate. Catalyzes the attachment of glycine to tRNA(Gly). This chain is Glycine--tRNA ligase, found in Thermococcus kodakarensis (strain ATCC BAA-918 / JCM 12380 / KOD1) (Pyrococcus kodakaraensis (strain KOD1)).